An 834-amino-acid polypeptide reads, in one-letter code: Glycerol-3-phosphate acyltransferase (834 aa).

The HXXXXD motif motif lies at 309–314 (CHRSHI).

This sequence belongs to the GPAT/DAPAT family.

The protein localises to the cell inner membrane. It catalyses the reaction sn-glycerol 3-phosphate + an acyl-CoA = a 1-acyl-sn-glycero-3-phosphate + CoA. It functions in the pathway phospholipid metabolism; CDP-diacylglycerol biosynthesis; CDP-diacylglycerol from sn-glycerol 3-phosphate: step 1/3. The polypeptide is Glycerol-3-phosphate acyltransferase (Pseudomonas paraeruginosa (strain DSM 24068 / PA7) (Pseudomonas aeruginosa (strain PA7))).